The primary structure comprises 619 residues: CREB-regulated transcription coactivator 3 (619 aa).

Ser-4 and Ser-62 each carry phosphoserine. A disordered region spans residues 129–148 (SQHLDESWPRQQPPWKEEKH). A Phosphothreonine modification is found at Thr-160. A Phosphoserine; by SIK2 modification is found at Ser-162. Lys-232 is covalently cross-linked (Glycyl lysine isopeptide (Lys-Gly) (interchain with G-Cter in SUMO2)). Phosphoserine occurs at positions 273, 329, 332, 370, 391, 396, and 410. Positions 375 to 478 (STTNLSGPSR…TQQPQAAPSL (104 aa)) are disordered. Residues 380-401 (SGPSRRRQPPVSPLTLSPGPEA) are required for interaction with PPP2CA and PPP2R1A. Composition is skewed to polar residues over residues 405-415 (FSRQLSATSPL) and 422-431 (QMVTSEQSPL). Residue Ser-443 is modified to Phosphoserine. A compositionally biased stretch (pro residues) spans 443–454 (SPPPPYPTPQEL). Residues 455–478 (PQPLLQQPHAQEPPTQQPQAAPSL) show a composition bias toward low complexity.

The protein belongs to the TORC family. Binding, as a tetramer, through its N-terminal region, with the bZIP domain of CREB1 enhances recruitment of TAF4 to the promoter. 'Arg-314' in the bZIP domain of CREB1 is essential for this interaction. Interacts (when phosphorylated at Ser-162 and Se-273) with 14-3-3 proteins. Interacts with YWHAE. Interacts (when phosphorylated at Ser-391) with phosphatase PP2A catalytic subunit PPP2CA and regulatory subunits PPP2R1A and PPP2R2A. Post-translationally, phosphorylation/dephosphorylation states of Ser-273 are required for regulating transduction of CREB activity. CRTCs/TORCs are inactive when phosphorylated, and active when dephosphorylated at this site. May be phosphorylated at Ser-391 by MAPK3/ERK1 and/or MAPK1/ERK2 or by some cyclin-dependent kinases such as CDK1,CDK2 or CDK5. Following adenylyl cyclase activation, dephosphorylated at Ser-162 and Ser-273 resulting in its dissociation from 14-3-3 proteins probably promoting CRTC3 translocation into the nucleus. As to expression, expressed in brown adipose tissues.

The protein resides in the nucleus. It is found in the cytoplasm. Its function is as follows. Transcriptional coactivator for CREB1 which activates transcription through both consensus and variant cAMP response element (CRE) sites. Acts as a coactivator, in the SIK/TORC signaling pathway, being active when dephosphorylated. Acts independently of CREB1 'Ser-133' phosphorylation. Enhances the interaction of CREB1 with TAF4. Regulates the expression of specific CREB-activated genes such as the steroidogenic gene, StAR. Potent coactivator of PPARGC1A and inducer of mitochondrial biogenesis in muscle cells. The polypeptide is CREB-regulated transcription coactivator 3 (Crtc3) (Mus musculus (Mouse)).